The primary structure comprises 643 residues: Fructose-1,6-bisphosphatase class 3 (643 aa).

This sequence belongs to the FBPase class 3 family. Requires Mn(2+) as cofactor.

The catalysed reaction is beta-D-fructose 1,6-bisphosphate + H2O = beta-D-fructose 6-phosphate + phosphate. Its pathway is carbohydrate biosynthesis; gluconeogenesis. The protein is Fructose-1,6-bisphosphatase class 3 of Streptococcus agalactiae serotype Ia (strain ATCC 27591 / A909 / CDC SS700).